The primary structure comprises 644 residues: Protein cueball (644 aa).

The signal sequence occupies residues 1 to 26 (MIRIRFGMDVLLVVLLATCLLTPAHG). The Extracellular segment spans residues 27–531 (TPLEWDFAVT…VCLTPRVWTS (505 aa)). Residues Asn82 and Asn108 are each glycosylated (N-linked (GlcNAc...) asparagine). LDL-receptor class B repeat units follow at residues 121–166 (MNLF…DVCR), 167–211 (RKLY…DQLS), and 212–257 (DRLF…TNDA). Asn175 and Asn190 each carry an N-linked (GlcNAc...) asparagine glycan. Asn313 is a glycosylation site (N-linked (GlcNAc...) asparagine). EGF-like domains follow at residues 398–430 (EIRE…FTGE) and 433–471 (ELSV…ARCE). 5 disulfides stabilise this stretch: Cys402–Cys411, Cys406–Cys421, Cys437–Cys447, Cys441–Cys459, and Cys461–Cys470. 2 N-linked (GlcNAc...) asparagine glycosylation sites follow: Asn473 and Asn508. A helical transmembrane segment spans residues 532–552 (SVIIILVVGIVSSLLLVAVIV). At 553–644 (HGIRRLYKPK…LIHNMEDDLY (92 aa)) the chain is on the cytoplasmic side.

Belongs to the cueball family.

It is found in the cell membrane. Functionally, has a role in spermatogenesis and oogenesis. This chain is Protein cueball, found in Drosophila simulans (Fruit fly).